Consider the following 63-residue polypeptide: Putative conjugal transfer lipoprotein XF_a0011.1 (63 aa).

The first 15 residues, 1–15 (MRYTFGIVTVYLLAG), serve as a signal peptide directing secretion. Cys16 carries N-palmitoyl cysteine lipidation. Cys16 carries the S-diacylglycerol cysteine lipid modification.

It to B.suis ORF12 in VirB region.

It is found in the cell inner membrane. The chain is Putative conjugal transfer lipoprotein XF_a0011.1 from Xylella fastidiosa (strain 9a5c).